The following is a 125-amino-acid chain: MARISNVNVPTNKRVMIGLTYIYGIGRSTAQKICQEVQVSVNKKVKDLSNQELVALRSIIESKYKVEGDLRREINLNIKKKKDIRCYEGLRHIRKLPVRGQNTHSNARTRKGKAIAIAGKKKPNK.

The protein belongs to the universal ribosomal protein uS13 family. As to quaternary structure, part of the 30S ribosomal subunit. Forms a loose heterodimer with protein S19. Forms two bridges to the 50S subunit in the 70S ribosome.

Functionally, located at the top of the head of the 30S subunit, it contacts several helices of the 16S rRNA. In the 70S ribosome it contacts the 23S rRNA (bridge B1a) and protein L5 of the 50S subunit (bridge B1b), connecting the 2 subunits; these bridges are implicated in subunit movement. Contacts the tRNAs in the A and P-sites. The protein is Small ribosomal subunit protein uS13 of Orientia tsutsugamushi (strain Ikeda) (Rickettsia tsutsugamushi).